Consider the following 641-residue polypeptide: Epithelial sodium channel subunit beta (641 aa).

Residues 1-50 (MHVKKYLLKGLHRLQKGPGYTYKELLVWYCDNTNTHGPKRIICEGPKKKA) lie on the Cytoplasmic side of the membrane. The chain crosses the membrane as a helical span at residues 51–71 (MWFVLTLLFTSLVCWQWGLFI). Topologically, residues 72–533 (KTYLNWEVSV…GGQFGFWMGG (462 aa)) are extracellular. 9 cysteine pairs are disulfide-bonded: cysteine 98/cysteine 273, cysteine 185/cysteine 190, cysteine 197/cysteine 204, cysteine 250/cysteine 257, cysteine 362/cysteine 449, cysteine 387/cysteine 445, cysteine 391/cysteine 441, cysteine 400/cysteine 427, and cysteine 402/cysteine 416. An N-linked (GlcNAc...) asparagine glycan is attached at asparagine 141. N-linked (GlcNAc...) asparagine glycosylation is present at asparagine 379. A helical transmembrane segment spans residues 534–554 (SVLCLIEFGEIIIDFVWITII). Residues 555-641 (KLVALAKSVR…IESDSEGDAI (87 aa)) are Cytoplasmic-facing. Residues 597–624 (TPGPDVEAYPHEQNPPIPGTPPPNYDSL) form a disordered region. Residues 609-620 (QNPPIPGTPPPN) are compositionally biased toward pro residues. The PY motif; recruits WW domain-containing proteins and is thereby required for ubiquitination and inhibition of the channel by NEDD4 and NEDD4L signature appears at 617 to 621 (PPPNY). Phosphoserine occurs at positions 634 and 636.

This sequence belongs to the amiloride-sensitive sodium channel (TC 1.A.6) family. SCNN1B subfamily. Component of the heterotrimeric epithelial sodium channel (ENaC) composed of an alpha/SCNN1A, a beta/SCNN1B and a gamma/SCNN1G subunit. An additional delta/SCNN1D subunit can replace the alpha/SCNN1A subunit to form an alternative channel with specific properties. Interacts with WWP1 (via WW domains). Interacts with WWP2 (via WW domains); inhibits the channel. Interacts with the full-length immature form of PCSK9 (pro-PCSK9). Interacts (N-glycosylated) with BPIFA1; the interaction is direct and inhibits the proteolytic processing of SCNN1A and SCNN1G and the activation of ENaC. Ubiquitinated. Can be ubiquitinated at multiple sites and undergo monoubiquitination and polyubiquitination. Ubiquitination by NEDD4 or NEDD4L inhibits the ENaC channel through endocytosis, intracellular retention and degradation of its individual subunits. However, some studies could not confirm the ubiquitination of this subunit of the ENaC. Post-translationally, phosphorylated on serine and threonine residues. Aldosterone and insulin increase the basal level of phosphorylation. In terms of processing, N-glycosylated. N-glycosylation is required for interaction with BPIFA1.

The protein localises to the apical cell membrane. It is found in the cytoplasmic vesicle membrane. The catalysed reaction is Na(+)(in) = Na(+)(out). With respect to regulation, originally identified and characterized by its inhibition by the diuretic drug amiloride. Its function is as follows. This is one of the three pore-forming subunits of the heterotrimeric epithelial sodium channel (ENaC), a critical regulator of sodium balance and fluid homeostasis. ENaC operates in epithelial tissues, where it mediates the electrodiffusion of sodium ions from extracellular fluid through the apical membrane of cells, with water following osmotically. It plays a key role in maintaining sodium homeostasis through electrogenic sodium reabsorption in the kidneys. Additionally, ENaC is essential for airway surface liquid homeostasis, which is crucial for proper mucus clearance. The protein is Epithelial sodium channel subunit beta of Bos taurus (Bovine).